The sequence spans 448 residues: Chromosomal replication initiator protein DnaA (448 aa).

The tract at residues 1 to 73 (MSTHLTETWE…VNALKLLTSK (73 aa)) is domain I, interacts with DnaA modulators. The interval 73–109 (KKYNIDFIVTTEEKIEENEKNHNNEKSNIVVNDEMST) is domain II. Residues 110–326 (MLNPKYTFDS…GALIRIVAFS (217 aa)) are domain III, AAA+ region. Residues glycine 154, glycine 156, lysine 157, and threonine 158 each coordinate ATP. Positions 327–448 (SLTNKEISVD…NELNKRINQK (122 aa)) are domain IV, binds dsDNA.

The protein belongs to the DnaA family. Oligomerizes as a right-handed, spiral filament on DNA at oriC.

The protein localises to the cytoplasm. In terms of biological role, plays an essential role in the initiation and regulation of chromosomal replication. ATP-DnaA binds to the origin of replication (oriC) to initiate formation of the DNA replication initiation complex once per cell cycle. Binds the DnaA box (a 9 base pair repeat at the origin) and separates the double-stranded (ds)DNA. Forms a right-handed helical filament on oriC DNA; dsDNA binds to the exterior of the filament while single-stranded (ss)DNA is stabiized in the filament's interior. The ATP-DnaA-oriC complex binds and stabilizes one strand of the AT-rich DNA unwinding element (DUE), permitting loading of DNA polymerase. After initiation quickly degrades to an ADP-DnaA complex that is not apt for DNA replication. Binds acidic phospholipids. This chain is Chromosomal replication initiator protein DnaA, found in Clostridium botulinum (strain 657 / Type Ba4).